Consider the following 457-residue polypeptide: Phosphoglucosamine mutase (457 aa).

Serine 103 functions as the Phosphoserine intermediate in the catalytic mechanism. Mg(2+) contacts are provided by serine 103, aspartate 245, aspartate 247, and aspartate 249. Serine 103 is subject to Phosphoserine.

This sequence belongs to the phosphohexose mutase family. The cofactor is Mg(2+). Post-translationally, activated by phosphorylation.

It catalyses the reaction alpha-D-glucosamine 1-phosphate = D-glucosamine 6-phosphate. Its function is as follows. Catalyzes the conversion of glucosamine-6-phosphate to glucosamine-1-phosphate. This is Phosphoglucosamine mutase from Syntrophotalea carbinolica (strain DSM 2380 / NBRC 103641 / GraBd1) (Pelobacter carbinolicus).